Reading from the N-terminus, the 222-residue chain is MSLIGKLFGTGGKGAKGPSPQEAIQKLRDTEEMLAKKQEFLEKKIEQELVTAKKHGTKNKRAALQALKRKKRYEKQLAQIDGTLSTIEFQREALENANTNTEVLKNMGFAAKAMKAAHDNMDIEKVDELMQDIADQQELAQEISDAISKPVGFGEDFDEDELMAELEELEQEELDKNLLEVQGPETVPLPNVPAASLPAKPVKKKQEEDDDDMRELENWATA.

Disordered regions lie at residues 1–21 and 177–222; these read MSLIGKLFGTGGKGAKGPSPQ and NLLE…WATA. Residues 21-182 are a coiled coil; it reads QEAIQKLRDT…ELDKNLLEVQ (162 aa).

This sequence belongs to the SNF7 family. As to quaternary structure, probable core component of the endosomal sorting required for transport complex III (ESCRT-III). ESCRT-III components are thought to multimerize to form a flat lattice on the perimeter membrane of the endosome.

The protein localises to the cytoplasm. The protein resides in the cytosol. It localises to the late endosome membrane. It is found in the midbody. Its function is as follows. Probable core component of the endosomal sorting required for transport complex III (ESCRT-III) which is involved in multivesicular bodies (MVBs) formation and sorting of endosomal cargo proteins into MVBs. MVBs contain intraluminal vesicles (ILVs) that are generated by invagination and scission from the limiting membrane of the endosome and mostly are delivered to lysosomes enabling degradation of membrane proteins, such as stimulated growth factor receptors, lysosomal enzymes and lipids. The sequence is that of Charged multivesicular body protein 4b (chmp4b) from Xenopus laevis (African clawed frog).